A 359-amino-acid polypeptide reads, in one-letter code: Type-1 angiotensin II receptor (359 aa).

Residues 1–25 are Extracellular-facing; the sequence is MILNSSTEDGIKRIQDDCPKAGRHN. An N-linked (GlcNAc...) (complex) asparagine glycan is attached at Asn-4. The angiotensin II site is built by Gln-15 and Asp-17. Cystine bridges form between Cys-18/Cys-274 and Cys-101/Cys-180. The chain crosses the membrane as a helical span at residues 26–55; sequence YIFVMIPTLYSIIFVVGIFGNSLVVIVIYF. Topologically, residues 56-61 are cytoplasmic; it reads YMKLKT. The helical transmembrane segment at 62-89 threads the bilayer; sequence VASVFLLNLALADLCFLLTLPLWAVYTA. The Extracellular portion of the chain corresponds to 90–98; it reads MEYRWPFGN. A helical transmembrane segment spans residues 99–125; it reads YLCKIASASVSFNLYASVFLLTCLSID. Topologically, residues 126–141 are cytoplasmic; the sequence is RYLAIVHPMKSRLRRT. Residues 142–165 traverse the membrane as a helical segment; sequence MLVAKVTCIIIWLLAGLASLPAII. Residues 166-190 are Extracellular-facing; the sequence is HRNVFFIENTNITVCAFHYESQNST. Arg-167 is an angiotensin II binding site. An N-linked (GlcNAc...) asparagine glycan is attached at Asn-176. Residues Phe-182, His-183, and Tyr-184 each coordinate angiotensin II. Residue Asn-188 is glycosylated (N-linked (GlcNAc...) asparagine). Residues 191–216 traverse the membrane as a helical segment; it reads LPIGLGLTKNILGFLFPFLIILTSYT. Position 199 (Lys-199) interacts with angiotensin II. Over 217 to 239 the chain is Cytoplasmic; the sequence is LIWKALKKAYEIQKNKPRNDDIF. Residues 240–268 form a helical membrane-spanning segment; the sequence is KIIMAIVLFFFFSWIPHQIFTFLDVLIQL. At 269-278 the chain is on the extracellular side; it reads GIIRDCRIAD. Residues 279 to 304 form a helical membrane-spanning segment; sequence IVDTAMPITICIAYFNNCLNPLFYGF. Residues 305 to 359 lie on the Cytoplasmic side of the membrane; sequence LGKKFKRYFLQLLKYIPPKAKSHSNLSTKMSTLSYRPSDNVSSSTKKPAPCFEVE. Residues 335-350 show a composition bias toward polar residues; it reads STLSYRPSDNVSSSTK. The segment at 335–359 is disordered; the sequence is STLSYRPSDNVSSSTKKPAPCFEVE. Cys-355 is lipidated: S-palmitoyl cysteine.

Belongs to the G-protein coupled receptor 1 family. As to quaternary structure, interacts with MAS1. Interacts with ARRB1. Interacts with FLNA (via filamin repeat 21); increases PKA-mediated phosphorylation of FLNA. C-terminal Ser or Thr residues may be phosphorylated. As to expression, liver, lung, adrenal and adrenocortical adenomas.

Its subcellular location is the cell membrane. With respect to regulation, strongly inhibited by anti-hypertensive drugs losartan, candesartan, valsartan, irbesartan, telmisartan, eprosartan, olmesartan and azilsartan, most of which share a common biphenyl-tetrazole scaffold. Its function is as follows. Receptor for angiotensin II, a vasoconstricting peptide, which acts as a key regulator of blood pressure and sodium retention by the kidney. The activated receptor in turn couples to G-alpha proteins G(q) (GNAQ, GNA11, GNA14 or GNA15) and thus activates phospholipase C and increases the cytosolic Ca(2+) concentrations, which in turn triggers cellular responses such as stimulation of protein kinase C. (Microbial infection) During SARS coronavirus-2/SARS-CoV-2 infection, it is able to recognize and internalize the complex formed by secreted ACE2 and SARS-CoV-2 spike protein through DNM2/dynamin 2-dependent endocytosis. The polypeptide is Type-1 angiotensin II receptor (Homo sapiens (Human)).